A 154-amino-acid chain; its full sequence is MAL-like protein (154 aa).

4 helical membrane passes run 24–44, 61–81, 99–119, and 131–151; these read LFLT…FWVW, VLYV…SYLF, GTTG…TIIS, and VAAS…AFSI. An MARVEL domain is found at 24–154; it reads LFLTIPFAFF…ILHAFSIYYH (131 aa).

This sequence belongs to the MAL family.

Its subcellular location is the membrane. This Mus musculus (Mouse) protein is MAL-like protein (Mall).